The sequence spans 45 residues: Photosystem II reaction center protein K (45 aa).

Positions 1-8 (MELMLLFA) are excised as a propeptide. A helical transmembrane segment spans residues 24–44 (LPVIPVLFLALAFVWQASVGF).

It belongs to the PsbK family. In terms of assembly, PSII is composed of 1 copy each of membrane proteins PsbA, PsbB, PsbC, PsbD, PsbE, PsbF, PsbH, PsbI, PsbJ, PsbK, PsbL, PsbM, PsbT, PsbX, PsbY, PsbZ, Psb30/Ycf12, peripheral proteins PsbO, CyanoQ (PsbQ), PsbU, PsbV and a large number of cofactors. It forms dimeric complexes.

The protein localises to the cellular thylakoid membrane. One of the components of the core complex of photosystem II (PSII). PSII is a light-driven water:plastoquinone oxidoreductase that uses light energy to abstract electrons from H(2)O, generating O(2) and a proton gradient subsequently used for ATP formation. It consists of a core antenna complex that captures photons, and an electron transfer chain that converts photonic excitation into a charge separation. The sequence is that of Photosystem II reaction center protein K from Cyanothece sp. (strain PCC 7425 / ATCC 29141).